Reading from the N-terminus, the 312-residue chain is HTH-type transcriptional regulator PtxR (312 aa).

In terms of domain architecture, HTH lysR-type spans 11–68 (LNLNHLYAFVAVAEHNSFTAAAEALGLSKSLLSEQLRRLEADLGIQLLTRTTRRMTLT). The H-T-H motif DNA-binding region spans 28–47 (FTAAAEALGLSKSLLSEQLR).

It belongs to the LysR transcriptional regulatory family. As to quaternary structure, monomer in solution. May dimerize on binding to DNA. Interacts with PtxS in the absence of 2-ketogluconate. Binding of the 2-ketogluconate effector to PtxS causes PtxS/PtxR complex dissociation.

With respect to regulation, negatively regulated by PtxS, which interacts with PtxR and prevents its activity. In terms of biological role, plays an important role in the regulation of the production of the virulence factor exotoxin A (toxA), via positive regulation of the transcription of the toxA gene. Acts by binding directly to the toxA promoter region. Besides toxA, PtxR modulates the expression of genes that code for the QS-controlled virulence factors. It negatively regulates the expression of the rhamnolipid and pyocyanine genes, through the autoinducer synthase RhlI, and the PQS synthesis operon pqsABCDE, while it positively regulates the expression of lasB through the autoinducer synthase LasI. Also positively regulates the expression of the exotoxin A regulatory protein (toxR or regA). In addition, is involved in the positive regulation of glucose metabolism via the regulation of the expression of the kgu and gad operons. Acts by binding directly to the promoter region of the kgu and gad operons. In Pseudomonas aeruginosa (strain ATCC 15692 / DSM 22644 / CIP 104116 / JCM 14847 / LMG 12228 / 1C / PRS 101 / PAO1), this protein is HTH-type transcriptional regulator PtxR.